A 450-amino-acid chain; its full sequence is Tripartite motif-containing protein 77 (450 aa).

The segment at 15-56 (CSICTDYLTDPVTICCGHRFCSPCLCLLWEDTLTPNCCPVCR) adopts an RING-type zinc-finger fold. The segment at 88–131 (SAMLICRRHQEIKNLICETDRSLLCFLCSQSPRHATHKHYMTRE) adopts a B box-type zinc-finger fold. The Zn(2+) site is built by cysteine 93, histidine 96, cysteine 115, and histidine 121. The B30.2/SPRY domain occupies 269-450 (QLSAWTITGV…LRPFICHGSK (182 aa)).

It belongs to the TRIM/RBCC family.

The polypeptide is Tripartite motif-containing protein 77 (TRIM77) (Homo sapiens (Human)).